Reading from the N-terminus, the 506-residue chain is UDP-N-acetylmuramoylalanine--D-glutamate ligase (506 aa).

Position 128-134 (128-134) interacts with ATP; the sequence is GTNGKTT.

Belongs to the MurCDEF family.

Its subcellular location is the cytoplasm. The enzyme catalyses UDP-N-acetyl-alpha-D-muramoyl-L-alanine + D-glutamate + ATP = UDP-N-acetyl-alpha-D-muramoyl-L-alanyl-D-glutamate + ADP + phosphate + H(+). The protein operates within cell wall biogenesis; peptidoglycan biosynthesis. In terms of biological role, cell wall formation. Catalyzes the addition of glutamate to the nucleotide precursor UDP-N-acetylmuramoyl-L-alanine (UMA). This is UDP-N-acetylmuramoylalanine--D-glutamate ligase from Albidiferax ferrireducens (strain ATCC BAA-621 / DSM 15236 / T118) (Rhodoferax ferrireducens).